The following is a 657-amino-acid chain: Leishmanolysin (657 aa).

Residues 1 to 41 (MSVDSSSSSTHRRRCVAARLVRLAAAGAAVTVAVGTAAAWA) form the signal peptide. Positions 42-102 (HAGALQHRCI…DPRPGSAPTV (61 aa)) are cleaved as a propeptide — activation peptide. At 44–611 (GALQHRCIHD…DRMVGLATAA (568 aa)) the chain is on the extracellular side. N107 carries an N-linked (GlcNAc...) asparagine glycan. Cystine bridges form between C127–C144 and C193–C232. H266 serves as a coordination point for Zn(2+). E267 is a catalytic residue. H270 contacts Zn(2+). N302 is a glycosylation site (N-linked (GlcNAc...) asparagine). 7 disulfide bridges follow: C316–C388, C395–C458, C408–C427, C417–C492, C469–C513, C518–C568, and C538–C561. A Zn(2+)-binding site is contributed by H336. N399, N409, N445, N466, and N501 each carry an N-linked (GlcNAc...) asparagine glycan. The chain crosses the membrane as a helical span at residues 612 to 632 (TVLLGMVLSLMALVVVWLLLV). At 633 to 657 (SCPWWCCKLGGPPASVTPACSPETE) the chain is on the cytoplasmic side.

The protein belongs to the peptidase M8 family. The cofactor is Zn(2+).

It is found in the membrane. It carries out the reaction Preference for hydrophobic residues at P1 and P1' and basic residues at P2' and P3'. A model nonapeptide is cleaved at -Ala-Tyr-|-Leu-Lys-Lys-.. Its function is as follows. Has an integral role during the infection of macrophages in the mammalian host. The polypeptide is Leishmanolysin (mspC) (Leishmania tropica).